Reading from the N-terminus, the 44-residue chain is uncharacterized protein (44 aa).

An N-terminal signal peptide occupies residues 1-28; the sequence is MLRDLGRRVAIAAILSGIILGGMSISLA.

This is an uncharacterized protein from Bacillus subtilis (strain 168).